Reading from the N-terminus, the 81-residue chain is Protein translocase subunit SecE (81 aa).

The helical transmembrane segment at 50 to 70 threads the bilayer; that stretch reads VAVILMVILVSTVIYFVDQIF.

This sequence belongs to the SecE/SEC61-gamma family. Component of the Sec protein translocase complex. Heterotrimer consisting of SecY, SecE and SecG subunits. The heterotrimers can form oligomers, although 1 heterotrimer is thought to be able to translocate proteins. Interacts with the ribosome. Interacts with SecDF, and other proteins may be involved. Interacts with SecA.

The protein resides in the cell inner membrane. Its subcellular location is the cellular thylakoid membrane. Functionally, essential subunit of the Sec protein translocation channel SecYEG. Clamps together the 2 halves of SecY. May contact the channel plug during translocation. In Synechocystis sp. (strain ATCC 27184 / PCC 6803 / Kazusa), this protein is Protein translocase subunit SecE.